The chain runs to 556 residues: Formate--tetrahydrofolate ligase 1 (556 aa).

65–72 (TPAGEGKS) is an ATP binding site.

The protein belongs to the formate--tetrahydrofolate ligase family.

The catalysed reaction is (6S)-5,6,7,8-tetrahydrofolate + formate + ATP = (6R)-10-formyltetrahydrofolate + ADP + phosphate. It participates in one-carbon metabolism; tetrahydrofolate interconversion. The chain is Formate--tetrahydrofolate ligase 1 from Streptococcus pyogenes serotype M18 (strain MGAS8232).